A 413-amino-acid polypeptide reads, in one-letter code: MDFTNLKNTDPELLDMIKKEEERQEYNIELIASENFTSLSVMEAMGSLLTNKYAEGYPHKRYYGGCEFVDEVEDLARERLKKLFAAEHANVQPHSGSQANMAVYMSVLQTGDTILGMDLSHGGHLTHGSPVNFSGKLYNFISYGVDKETETIDYEQLKKIALENRPKMIVSGASAYPRIIDFQKIREICDEIDAYMMVDMAHIAGLVATGLHPSPVPYADFVTTTTHKTLRGPRGGAILCKEKYAKAVDKAIFPGIQGGPLMHTIAAKAVCFGEALREDYKEYMQQVVKNTKVLGEELKNYGFRLISGGTDNHLLLIDLTNKNITGKDAEKLLDSVGITVNKNTIPFETLSPFITSGIRIGTPAVTTRGFKEEEMKKIAYFMNYSIEHREENLSQIKEQIKEICKKYPLHQNA.

Residues Leu-119 and 123 to 125 (GHL) each bind (6S)-5,6,7,8-tetrahydrofolate. Lys-228 bears the N6-(pyridoxal phosphate)lysine mark. 351-353 (SPF) is a binding site for (6S)-5,6,7,8-tetrahydrofolate.

Belongs to the SHMT family. Homodimer. Pyridoxal 5'-phosphate serves as cofactor.

The protein resides in the cytoplasm. The catalysed reaction is (6R)-5,10-methylene-5,6,7,8-tetrahydrofolate + glycine + H2O = (6S)-5,6,7,8-tetrahydrofolate + L-serine. The protein operates within one-carbon metabolism; tetrahydrofolate interconversion. It functions in the pathway amino-acid biosynthesis; glycine biosynthesis; glycine from L-serine: step 1/1. Its function is as follows. Catalyzes the reversible interconversion of serine and glycine with tetrahydrofolate (THF) serving as the one-carbon carrier. This reaction serves as the major source of one-carbon groups required for the biosynthesis of purines, thymidylate, methionine, and other important biomolecules. Also exhibits THF-independent aldolase activity toward beta-hydroxyamino acids, producing glycine and aldehydes, via a retro-aldol mechanism. The chain is Serine hydroxymethyltransferase from Clostridium botulinum (strain 657 / Type Ba4).